The primary structure comprises 327 residues: Cytochrome f (327 aa).

The signal sequence occupies residues 1 to 24; sequence MKRIGLVFCALLLLLGMGARPAAA. 4 residues coordinate heme: Y25, C45, C48, and H49. The helical transmembrane segment at 293–313 threads the bilayer; the sequence is VKWLVAFLAAITITQVLLVLK.

Belongs to the cytochrome f family. In terms of assembly, the 4 large subunits of the cytochrome b6-f complex are cytochrome b6, subunit IV (17 kDa polypeptide, PetD), cytochrome f and the Rieske protein, while the 4 small subunits are PetG, PetL, PetM and PetN. The complex functions as a dimer. It depends on heme as a cofactor.

Its subcellular location is the cellular thylakoid membrane. In terms of biological role, component of the cytochrome b6-f complex, which mediates electron transfer between photosystem II (PSII) and photosystem I (PSI), cyclic electron flow around PSI, and state transitions. The protein is Cytochrome f of Synechococcus sp. (strain JA-2-3B'a(2-13)) (Cyanobacteria bacterium Yellowstone B-Prime).